Here is a 92-residue protein sequence, read N- to C-terminus: Probable Fe(2+)-trafficking protein (92 aa).

The protein belongs to the Fe(2+)-trafficking protein family.

Functionally, could be a mediator in iron transactions between iron acquisition and iron-requiring processes, such as synthesis and/or repair of Fe-S clusters in biosynthetic enzymes. In Xanthomonas campestris pv. campestris (strain 8004), this protein is Probable Fe(2+)-trafficking protein.